Here is a 284-residue protein sequence, read N- to C-terminus: Tropomyosin-2 (284 aa).

Residues 1–284 are a coiled coil; the sequence is MDAIKKKMQA…DQTFAELTGY (284 aa). The disordered stretch occupies residues 82-110; sequence ESEVATQNRKVQQIEEDLEKSEERSTTAQ.

This sequence belongs to the tropomyosin family. Homodimer.

In terms of biological role, tropomyosin, in association with the troponin complex, plays a central role in the calcium dependent regulation of muscle contraction. May also regulate motor systems required to maintain nuclear integrity and apico-basal polarity during embryogenesis. The polypeptide is Tropomyosin-2 (Tm2) (Drosophila melanogaster (Fruit fly)).